Reading from the N-terminus, the 156-residue chain is Small ribosomal subunit protein uS7 (156 aa).

The protein belongs to the universal ribosomal protein uS7 family. As to quaternary structure, part of the 30S ribosomal subunit. Contacts proteins S9 and S11.

Its function is as follows. One of the primary rRNA binding proteins, it binds directly to 16S rRNA where it nucleates assembly of the head domain of the 30S subunit. Is located at the subunit interface close to the decoding center, probably blocks exit of the E-site tRNA. This chain is Small ribosomal subunit protein uS7, found in Mycoplasmopsis agalactiae (strain NCTC 10123 / CIP 59.7 / PG2) (Mycoplasma agalactiae).